Here is a 752-residue protein sequence, read N- to C-terminus: MAHLLGSQACMESLRTDLTDLQGAIVDVFSRAGPVRFPSWKFPDRMACDLDMVALLEHYDHVPGDPEFTQLSHAVLLELVIDRLLLLLQSCMSYLENLGSEQMMPPAQAAGPCMSVGLTVRRFWDSLLRLGTLHQQPLPQKGANQRETPTSKPTTKGEPARSPEYLTTKLIKPSSPVLGLPQTCQEPESIPVRASLQFPATTFKNTRSVHSQTIETALVPCDACASVQGSLQKVGKVVISLCQSQNLPSSLGQFQQLVQDSMGLRPLPAATVGRWAAEQRKDLTRLSKHVEALRAQLEEAEGQKDGLRKQAGKLEQALKQEQGARRRQAEEDEQCLSEWEHDKQQLLTETSDLKTKMATLERELKQQRESTQAVEAKAQQLQEEGERRAAAERQVQQLEEQVQQLEAQVQLLVGRLEGAGQQVCWASTELDKEKARVDSMVRHQESLQAKQRALLKQLDSLDQEREELRGSLDEAEAQRARVEEQLQSEREQGQCQLRAQQELLQSLQREKQGLEQATTDLRLTILELERELEELKERERLLVAFPDLHRPTETQIHGGRSSSVESQITCPTDSGNVTDHMERQVQSNDIRIRVLQEENGRLQSMLSKIREVAQQGGLKLIPQDRLWSPSSKGTQGATPPVQAKSTSPGPLGRQHLPSSRTGRTLLGQPCTSPPRQPCTSPPRQPCTSPPRQPCTSPSRQPCSQPSKSLLEGVTHLDTCTQNPIKVLVRLRKRLSPGRGQASSAHQPQERPM.

Residues 135–154 are compositionally biased toward polar residues; it reads QQPLPQKGANQRETPTSKPT. Disordered regions lie at residues 135–163 and 316–336; these read QQPLPQKGANQRETPTSKPTTKGEPARSP and QALKQEQGARRRQAEEDEQCL. Coiled-coil stretches lie at residues 276-544 and 579-615; these read AAEQ…LLVA and DHMERQVQSNDIRIRVLQEENGRLQSMLSKIREVAQQ. Residues 316–329 are compositionally biased toward basic and acidic residues; the sequence is QALKQEQGARRRQA. 2 disordered regions span residues 620–707 and 731–752; these read LIPQ…QPSK and RKRLSPGRGQASSAHQPQERPM. A compositionally biased stretch (polar residues) spans 628–648; the sequence is SPSSKGTQGATPPVQAKSTSP. Residues 671–692 show a composition bias toward pro residues; it reads TSPPRQPCTSPPRQPCTSPPRQ. Residues 693–707 are compositionally biased toward polar residues; that stretch reads PCTSPSRQPCSQPSK.

This is Coiled-coil domain-containing protein 157 (CCDC157) from Homo sapiens (Human).